A 500-amino-acid chain; its full sequence is NAD(P)H-quinone oxidoreductase subunit 2 B, chloroplastic (500 aa).

A run of 13 helical transmembrane segments spans residues 14–34, 41–61, 78–98, 116–136, 166–186, 211–231, 242–262, 277–297, 305–325, 335–355, 376–396, 409–429, and 467–487; these read SILPECILISSLIIILLIDLT, WLYFISLTSLIISITVLLFQL, FNGIFRISIAFSSLLCIPLSM, LTATIGGMFLCGANDLIIIFI, LLMGGASSSILAYGFSWLYGL, ISIVLIFIIAGIAFKLSLVPF, APTSVIAFFSVTSKIAGLALA, WHLILEIIAILSMILGNFIAI, MLAYSSISQIGYFMIGVIAGD, YMLFYIFMNLGTFACITLFGL, ASFLALSLLSLGGIPPLAGFF, GLYLSVSVGLFTSVISIYYYL, and IIICVIGSTFSGIVINPVIAI.

It belongs to the complex I subunit 2 family. In terms of assembly, NDH is composed of at least 16 different subunits, 5 of which are encoded in the nucleus.

The protein localises to the plastid. The protein resides in the chloroplast thylakoid membrane. It catalyses the reaction a plastoquinone + NADH + (n+1) H(+)(in) = a plastoquinol + NAD(+) + n H(+)(out). The catalysed reaction is a plastoquinone + NADPH + (n+1) H(+)(in) = a plastoquinol + NADP(+) + n H(+)(out). NDH shuttles electrons from NAD(P)H:plastoquinone, via FMN and iron-sulfur (Fe-S) centers, to quinones in the photosynthetic chain and possibly in a chloroplast respiratory chain. The immediate electron acceptor for the enzyme in this species is believed to be plastoquinone. Couples the redox reaction to proton translocation, and thus conserves the redox energy in a proton gradient. The protein is NAD(P)H-quinone oxidoreductase subunit 2 B, chloroplastic of Anthoceros angustus (Hornwort).